The primary structure comprises 302 residues: Glycine N-acyltransferase-like protein 1 (302 aa).

Belongs to the glycine N-acyltransferase family. In terms of tissue distribution, expressed in liver and kidney and, at lower levels, in pancreas, testis, ovary and stomach.

It catalyses the reaction an acyl-CoA + L-glutamine = an N(2)-acyl-L-glutamine + CoA + H(+). In terms of biological role, acyltransferase which transfers an acyl group to the N-terminus of glutamine. Can use phenylacetyl-CoA as an acyl donor. The protein is Glycine N-acyltransferase-like protein 1 of Homo sapiens (Human).